The sequence spans 272 residues: Nitrogenase iron protein (272 aa).

8 to 15 provides a ligand contact to ATP; that stretch reads GKGGIGKS. Cys94 lines the [4Fe-4S] cluster pocket. ADP-ribosylarginine; by dinitrogenase reductase ADP-ribosyltransferase is present on Arg97. Position 129 (Cys129) interacts with [4Fe-4S] cluster.

It belongs to the NifH/BchL/ChlL family. As to quaternary structure, homodimer. It depends on [4Fe-4S] cluster as a cofactor. Post-translationally, the reversible ADP-ribosylation of Arg-97 inactivates the nitrogenase reductase and regulates nitrogenase activity.

The enzyme catalyses N2 + 8 reduced [2Fe-2S]-[ferredoxin] + 16 ATP + 16 H2O = H2 + 8 oxidized [2Fe-2S]-[ferredoxin] + 2 NH4(+) + 16 ADP + 16 phosphate + 6 H(+). Functionally, the key enzymatic reactions in nitrogen fixation are catalyzed by the nitrogenase complex, which has 2 components: the iron protein and the molybdenum-iron protein. In Desulforamulus reducens (strain ATCC BAA-1160 / DSM 100696 / MI-1) (Desulfotomaculum reducens), this protein is Nitrogenase iron protein.